The chain runs to 113 residues: Large ribosomal subunit protein bL17 (113 aa).

The protein belongs to the bacterial ribosomal protein bL17 family. Part of the 50S ribosomal subunit. Contacts protein L32.

The chain is Large ribosomal subunit protein bL17 from Symbiobacterium thermophilum (strain DSM 24528 / JCM 14929 / IAM 14863 / T).